A 273-amino-acid chain; its full sequence is Dermonecrotic toxin LhSicTox-alphaIA2avi (273 aa).

The active site involves H5. Mg(2+) contacts are provided by E25 and D27. The active-site Nucleophile is the H41. Cystine bridges form between C45-C51 and C47-C190. Mg(2+) is bound at residue D85.

This sequence belongs to the arthropod phospholipase D family. Class II subfamily. It depends on Mg(2+) as a cofactor. As to expression, expressed by the venom gland.

Its subcellular location is the secreted. It carries out the reaction an N-(acyl)-sphingosylphosphocholine = an N-(acyl)-sphingosyl-1,3-cyclic phosphate + choline. The enzyme catalyses an N-(acyl)-sphingosylphosphoethanolamine = an N-(acyl)-sphingosyl-1,3-cyclic phosphate + ethanolamine. The catalysed reaction is a 1-acyl-sn-glycero-3-phosphocholine = a 1-acyl-sn-glycero-2,3-cyclic phosphate + choline. It catalyses the reaction a 1-acyl-sn-glycero-3-phosphoethanolamine = a 1-acyl-sn-glycero-2,3-cyclic phosphate + ethanolamine. In terms of biological role, dermonecrotic toxins cleave the phosphodiester linkage between the phosphate and headgroup of certain phospholipids (sphingolipid and lysolipid substrates), forming an alcohol (often choline) and a cyclic phosphate. This toxin acts on sphingomyelin (SM). It may also act on ceramide phosphoethanolamine (CPE), lysophosphatidylcholine (LPC) and lysophosphatidylethanolamine (LPE), but not on lysophosphatidylserine (LPS), and lysophosphatidylglycerol (LPG). It acts by transphosphatidylation, releasing exclusively cyclic phosphate products as second products. Induces dermonecrosis, hemolysis, increased vascular permeability, edema, inflammatory response, and platelet aggregation. The protein is Dermonecrotic toxin LhSicTox-alphaIA2avi of Loxosceles hirsuta (Recluse spider).